Here is a 63-residue protein sequence, read N- to C-terminus: Large ribosomal subunit protein uL29 (63 aa).

This sequence belongs to the universal ribosomal protein uL29 family.

This chain is Large ribosomal subunit protein uL29, found in Stutzerimonas stutzeri (strain A1501) (Pseudomonas stutzeri).